The following is a 100-amino-acid chain: MAKKSLIQREKKRQKLEQKYHSIRRSSKKEISKVPSLSDKWEIYGKLQSLPRNSAPTRLHRRCFLTGRPRANYRDFGLSGHILREMVHACLLPGATRSSW.

The disordered stretch occupies residues 1–31 (MAKKSLIQREKKRQKLEQKYHSIRRSSKKEI).

It belongs to the universal ribosomal protein uS14 family. Part of the 30S ribosomal subunit.

It localises to the plastid. The protein resides in the chloroplast. Functionally, binds 16S rRNA, required for the assembly of 30S particles. The protein is Small ribosomal subunit protein uS14c of Atropa belladonna (Belladonna).